We begin with the raw amino-acid sequence, 261 residues long: MPRYAFRIEYDGHPFKGWQRQTDLPSVQGAVEAALAKLEADVPTIAAAGRTDTGVHALGQVAHADMQRDWDPFRLAEALNYHLKPAPVAITACARAHDDFHARFSATWRSYTYRMICRRAPLVHARGHAWAVRGTLDVTAMAEGARHLIGKHDFTTFRATHCQALSPIKTMDEIRVEEVSLPAGTEIRFHLKAQSFLHNQVRSIVGSLEHVGSGAWAPDDMRRALEACDRAECGTVAPPDGLYMTGVGYDEDPFADGWKDT.

Catalysis depends on D52, which acts as the Nucleophile. Y111 is a binding site for substrate.

This sequence belongs to the tRNA pseudouridine synthase TruA family. In terms of assembly, homodimer.

It catalyses the reaction uridine(38/39/40) in tRNA = pseudouridine(38/39/40) in tRNA. Its function is as follows. Formation of pseudouridine at positions 38, 39 and 40 in the anticodon stem and loop of transfer RNAs. This is tRNA pseudouridine synthase A from Jannaschia sp. (strain CCS1).